The primary structure comprises 299 residues: Protein translocase subunit SecF (299 aa).

6 helical membrane passes run 14–34, 142–162, 166–186, 193–213, 245–265, and 270–290; these read VLIV…FYHG, IFLV…RFKL, IASI…LGVF, YIIV…IIIF, LTSV…EGSI, and LVFM…ASPI.

Belongs to the SecD/SecF family. SecF subfamily. Forms a complex with SecD. Part of the essential Sec protein translocation apparatus which comprises SecA, SecYEG and auxiliary proteins SecDF. Other proteins may also be involved.

Its subcellular location is the cell inner membrane. Part of the Sec protein translocase complex. Interacts with the SecYEG preprotein conducting channel. SecDF uses the proton motive force (PMF) to complete protein translocation after the ATP-dependent function of SecA. The polypeptide is Protein translocase subunit SecF (Borreliella burgdorferi (strain ATCC 35210 / DSM 4680 / CIP 102532 / B31) (Borrelia burgdorferi)).